Reading from the N-terminus, the 437-residue chain is Phosphomethylpyrimidine synthase (437 aa).

Substrate contacts are provided by residues asparagine 69, methionine 98, tyrosine 127, histidine 163, 185-187 (SRG), 226-229 (DACR), and glutamate 265. Histidine 269 lines the Zn(2+) pocket. Tyrosine 292 contacts substrate. Histidine 333 lines the Zn(2+) pocket. Residues cysteine 409, cysteine 412, and cysteine 416 each coordinate [4Fe-4S] cluster.

This sequence belongs to the ThiC family. [4Fe-4S] cluster is required as a cofactor.

It catalyses the reaction 5-amino-1-(5-phospho-beta-D-ribosyl)imidazole + S-adenosyl-L-methionine = 4-amino-2-methyl-5-(phosphooxymethyl)pyrimidine + CO + 5'-deoxyadenosine + formate + L-methionine + 3 H(+). The protein operates within cofactor biosynthesis; thiamine diphosphate biosynthesis. Catalyzes the synthesis of the hydroxymethylpyrimidine phosphate (HMP-P) moiety of thiamine from aminoimidazole ribotide (AIR) in a radical S-adenosyl-L-methionine (SAM)-dependent reaction. This Clostridium botulinum (strain Langeland / NCTC 10281 / Type F) protein is Phosphomethylpyrimidine synthase.